The sequence spans 33 residues: Protamine-1B (33 aa).

The interval 1-33 is disordered; that stretch reads PRRRRRRSSSRPIRRRRPRRVSRRRRRGGRRRR.

In terms of tissue distribution, testis.

The protein resides in the nucleus. The protein localises to the chromosome. Protamines substitute for histones in the chromatin of sperm during the haploid phase of spermatogenesis. They compact sperm DNA into a highly condensed, stable and inactive complex. This chain is Protamine-1B, found in Oncorhynchus mykiss (Rainbow trout).